The primary structure comprises 1432 residues: ABC transporter asL7 (1432 aa).

A compositionally biased stretch (polar residues) spans 1–20 (MFDTTKLQSSTQDGSTSSVT). Residues 1–36 (MFDTTKLQSSTQDGSTSSVTGEPIFGANDPNSELNP) are disordered. Residues 91 to 341 (LALPGMLIRN…FERLGFECPS (251 aa)) enclose the ABC transporter 1 domain. Residue N265 is glycosylated (N-linked (GlcNAc...) asparagine). Helical transmembrane passes span 450–470 (PTIVVTMGNFVLALIMSSLFF), 484–504 (VVLFMAVMFNAFASVLEVMTL), 530–550 (VLMDLPIKVLACVSFNLVFYF), 559–579 (GNFFFYLLASFFIVLSMSGIF), 597–617 (MIPASILMVFLITFAGFMVPI), and 702–722 (IGIVIAMTIFNYTMCFITSEY). The ABC transporter 2 domain occupies 786-1029 (FHWRNVCYDI…TLVEYFERKA (244 aa)). 822-829 (GVSGAGKT) provides a ligand contact to ATP. The N-linked (GlcNAc...) asparagine glycan is linked to N1017. Residues 1076-1095 (LSRLREHGSQSNSHDSEKSE) form a disordered region. A run of 6 helical transmembrane segments spans residues 1135-1155 (FALCGVVSLFIGLVFLNSPLS), 1166-1186 (VFQLFAIVGQLVSQQMPQFII), 1215-1235 (IPYYALASVMMWALWYFPIGL), 1251-1271 (LMWLLFLAWLMWVSTFGHFCI), 1279-1299 (AGANAANFMYVLVNFFCGALI), and 1317-1337 (LSYLVSSMLSAGIANVEVTCA). N1371 carries an N-linked (GlcNAc...) asparagine glycan. Residues 1402-1422 (FGIIWVYVIFNISAAITLYWV) traverse the membrane as a helical segment.

It belongs to the ABC transporter superfamily. ABCG family. PDR (TC 3.A.1.205) subfamily.

The protein resides in the cell membrane. In terms of biological role, ABC transporter; part of the gene cluster that mediates the biosynthesis of xenovulene A, an unusual meroterpenoid that has potent inhibitory effects on the human gamma-aminobutyrate A (GABAA) benzodiazepine receptor. The sequence is that of ABC transporter asL7 from Sarocladium schorii (Acremonium strictum (strain IMI 501407)).